Reading from the N-terminus, the 601-residue chain is uncharacterized protein (601 aa).

Positions 127–364 (SSLFSSGSPP…PAFANDDTVH (238 aa)) are disordered. Over residues 128–137 (SLFSSGSPPD) the composition is skewed to polar residues. The span at 141-154 (RNSTSNLSSVSTNS) shows a compositional bias: low complexity. Composition is skewed to polar residues over residues 159-177 (TIGS…ASQR), 199-213 (ALSS…NVTP), and 232-250 (SATN…SPSQ). Phosphoserine is present on residues serine 247 and serine 281. Low complexity predominate over residues 265-281 (SLSSSPSSEDSDLSLSS). Basic and acidic residues-rich tracts occupy residues 286–296 (DEKKQPSKSEK) and 313–325 (GSKE…KEKA). Serine 335 is subject to Phosphoserine. The span at 338 to 356 (DTSTEYDSNSLRRSRSNPA) shows a compositional bias: polar residues.

This is an uncharacterized protein from Schizosaccharomyces pombe (strain 972 / ATCC 24843) (Fission yeast).